A 144-amino-acid chain; its full sequence is Deoxyuridine 5'-triphosphate nucleotidohydrolase (144 aa).

Residues Ser-66, Gly-79, Asp-82, Tyr-85, Lys-90, Arg-134, Phe-139, and Gly-140 each coordinate dUMP.

This sequence belongs to the dUTPase family. As to quaternary structure, homotrimer. Mg(2+) is required as a cofactor.

The catalysed reaction is dUTP + H2O = dUMP + diphosphate + H(+). It functions in the pathway pyrimidine metabolism; dUMP biosynthesis; dUMP from dCTP (dUTP route): step 2/2. In terms of biological role, involved in nucleotide metabolism via production of dUMP, the immediate precursor of thymidine nucleotides, and decreases the intracellular concentration of dUTP so that uracil cannot be incorporated into DNA. This is Deoxyuridine 5'-triphosphate nucleotidohydrolase (DUT1) from Candida glabrata (strain ATCC 2001 / BCRC 20586 / JCM 3761 / NBRC 0622 / NRRL Y-65 / CBS 138) (Yeast).